A 399-amino-acid chain; its full sequence is Acetate kinase (399 aa).

Asn-7 contacts Mg(2+). Lys-14 is an ATP binding site. Substrate is bound at residue Arg-90. Asp-147 acts as the Proton donor/acceptor in catalysis. Residues 207-211 (HLGNG), 282-284 (DFR), and 330-334 (GIGEN) each bind ATP. Glu-385 is a binding site for Mg(2+).

Belongs to the acetokinase family. In terms of assembly, homodimer. Mg(2+) is required as a cofactor. It depends on Mn(2+) as a cofactor.

The protein localises to the cytoplasm. The enzyme catalyses acetate + ATP = acetyl phosphate + ADP. Its pathway is metabolic intermediate biosynthesis; acetyl-CoA biosynthesis; acetyl-CoA from acetate: step 1/2. Its function is as follows. Catalyzes the formation of acetyl phosphate from acetate and ATP. Can also catalyze the reverse reaction. In Caldicellulosiruptor bescii (strain ATCC BAA-1888 / DSM 6725 / KCTC 15123 / Z-1320) (Anaerocellum thermophilum), this protein is Acetate kinase.